Consider the following 72-residue polypeptide: Putative D-serine transporter DsdX-like protein (72 aa).

The polypeptide is Putative D-serine transporter DsdX-like protein (dsdX) (Escherichia coli O157:H7).